Reading from the N-terminus, the 133-residue chain is Holo-[acyl-carrier-protein] synthase (133 aa).

Mg(2+) is bound by residues Asp8 and Glu57.

This sequence belongs to the P-Pant transferase superfamily. AcpS family. Mg(2+) serves as cofactor.

It is found in the cytoplasm. It carries out the reaction apo-[ACP] + CoA = holo-[ACP] + adenosine 3',5'-bisphosphate + H(+). In terms of biological role, transfers the 4'-phosphopantetheine moiety from coenzyme A to a Ser of acyl-carrier-protein. In Bartonella bacilliformis (strain ATCC 35685 / KC583 / Herrer 020/F12,63), this protein is Holo-[acyl-carrier-protein] synthase.